A 276-amino-acid polypeptide reads, in one-letter code: Halorhodopsin (276 aa).

A propeptide spanning residues 1–21 (MTAVSTTATTVLQATQSDVLQ) is cleaved from the precursor. The Extracellular segment spans residues 22 to 25 (EIQS). The chain crosses the membrane as a helical span at residues 26–51 (NFLLNSSIWVNIALAGVVILLFVAMG). Topologically, residues 52-57 (RDLESP) are cytoplasmic. The chain crosses the membrane as a helical span at residues 58–81 (RAKLIWVATMLVPLVSISSYAGLA). Over 82-105 (SGLTVGFLQMPPGHALAGQEVLSP) the chain is Extracellular. A helical transmembrane segment spans residues 106 to 127 (WGRYLTWTFSTPMILLALGLLA). At 128-130 (DTD) the chain is on the cytoplasmic side. The helical transmembrane segment at 131–154 (IASLFTAITMDIGMCVTGLAAALI) threads the bilayer. Over 155–157 (TSS) the chain is Extracellular. The helical transmembrane segment at 158–180 (HLLRWVFYGISCAFFVAVLYVLL) threads the bilayer. At 181-192 (VQWPADAEAAGT) the chain is on the cytoplasmic side. Residues 193 to 216 (SEIFGTLKILTVVLWLGYPILWAL) form a helical membrane-spanning segment. Residues 217 to 225 (GSEGVALLS) are Extracellular-facing. The helical transmembrane segment at 226 to 254 (VGVTSWGYSGLDILAKYVFAFLLLRWVAA) threads the bilayer. Lys-241 carries the post-translational modification N6-(retinylidene)lysine. Topologically, residues 255–276 (NEGTVSGSGMGIGSGGAAPADD) are cytoplasmic.

The protein belongs to the archaeal/bacterial/fungal opsin family.

The protein resides in the cell membrane. Its function is as follows. Light-driven anion pump. This is Halorhodopsin from Halobacterium halobium (strain shark).